Reading from the N-terminus, the 694-residue chain is Nuclear cap-binding protein subunit 3 (694 aa).

Positions 1–47 (MAAVRSLRVSVKSDSASDRSESDSESDSDRDAREAEPMEVEEGEVEL) are disordered. Residues 15–36 (SASDRSESDSESDSDRDAREAE) are compositionally biased toward basic and acidic residues. Residues 37–47 (PMEVEEGEVEL) are compositionally biased toward acidic residues. The tract at residues 126-187 (EALHMSGVDD…LSRMPDKEEV (62 aa)) is RNA recognition motif (RRM) domain. The short motif at 155–158 (WIDD) is the WLDD motif; essential for 7-methylguanosine-containing mRNA cap binding element. Disordered stretches follow at residues 183–277 (DKEE…VKPF), 336–430 (ILKT…MDYD), and 461–694 (LRNS…DSDS). The span at 189 to 203 (NTDSSKPSELPVQTQ) shows a compositional bias: polar residues. Residues 212–235 (DDDDDDDEEEEGEVDDDDDDDEED) show a composition bias toward acidic residues. Residues 236-264 (EKARDIEDETEKKPQETRETSLSQAERDS) show a composition bias toward basic and acidic residues. Residues 368-386 (EPIEEEEEEEEDGEEDMDA) are compositionally biased toward acidic residues. Basic and acidic residues predominate over residues 387–404 (DDRVVEYKDRGEKERGPR). Gly residues predominate over residues 477-496 (IGGGGGGGSGGAVEGRGEGG). Composition is skewed to basic and acidic residues over residues 501–517 (TSEK…EKRQ), 563–595 (SRRE…DKKT), and 605–618 (SHKD…DKPS). A compositionally biased stretch (acidic residues) spans 634 to 646 (DSDGVEDEDEEDD). Low complexity predominate over residues 685 to 694 (DGSNGSDSDS).

This sequence belongs to the NCBP3 family. Component of an alternative cap-binding complex (CBC) composed of NCBP1/CBP80 and NCBP3.

It is found in the nucleus. It localises to the cytoplasm. Associates with NCBP1/CBP80 to form an alternative cap-binding complex (CBC) which plays a key role in mRNA export. NCBP3 serves as adapter protein linking the capped RNAs (m7GpppG-capped RNA) to NCBP1/CBP80. Unlike the conventional CBC with NCBP2 which binds both small nuclear RNA (snRNA) and messenger (mRNA) and is involved in their export from the nucleus, the alternative CBC with NCBP3 does not bind snRNA and associates only with mRNA thereby playing a role in only mRNA export. This chain is Nuclear cap-binding protein subunit 3, found in Danio rerio (Zebrafish).